The following is a 220-amino-acid chain: Probable nicotinate-nucleotide adenylyltransferase (220 aa).

It belongs to the NadD family.

It carries out the reaction nicotinate beta-D-ribonucleotide + ATP + H(+) = deamido-NAD(+) + diphosphate. The protein operates within cofactor biosynthesis; NAD(+) biosynthesis; deamido-NAD(+) from nicotinate D-ribonucleotide: step 1/1. In terms of biological role, catalyzes the reversible adenylation of nicotinate mononucleotide (NaMN) to nicotinic acid adenine dinucleotide (NaAD). This chain is Probable nicotinate-nucleotide adenylyltransferase, found in Yersinia pseudotuberculosis serotype O:1b (strain IP 31758).